Here is a 392-residue protein sequence, read N- to C-terminus: Elongation factor Tu (392 aa).

Residues 10 to 202 (KVHVNVGTIG…VLDEYIEDPI (193 aa)) enclose the tr-type G domain. The segment at 19–26 (GHVDHGKT) is G1. Residue 19–26 (GHVDHGKT) coordinates GTP. Threonine 26 contacts Mg(2+). A G2 region spans residues 60–64 (GITIN). Residues 81–84 (DCPG) are G3. Residues 81-85 (DCPGH) and 136-139 (NKCD) contribute to the GTP site. Positions 136–139 (NKCD) are G4. The interval 174–176 (SAL) is G5.

The protein belongs to the TRAFAC class translation factor GTPase superfamily. Classic translation factor GTPase family. EF-Tu/EF-1A subfamily. In terms of assembly, monomer.

Its subcellular location is the cytoplasm. It catalyses the reaction GTP + H2O = GDP + phosphate + H(+). GTP hydrolase that promotes the GTP-dependent binding of aminoacyl-tRNA to the A-site of ribosomes during protein biosynthesis. This chain is Elongation factor Tu, found in Phytoplasma mali (strain AT).